We begin with the raw amino-acid sequence, 153 residues long: Deoxyuridine 5'-triphosphate nucleotidohydrolase (153 aa).

Residues 71 to 73 (RSG), Asn-84, 88 to 90 (TID), and Lys-98 contribute to the substrate site.

Belongs to the dUTPase family. Mg(2+) serves as cofactor.

The catalysed reaction is dUTP + H2O = dUMP + diphosphate + H(+). It participates in pyrimidine metabolism; dUMP biosynthesis; dUMP from dCTP (dUTP route): step 2/2. Its function is as follows. This enzyme is involved in nucleotide metabolism: it produces dUMP, the immediate precursor of thymidine nucleotides and it decreases the intracellular concentration of dUTP so that uracil cannot be incorporated into DNA. In Wolbachia pipientis subsp. Culex pipiens (strain wPip), this protein is Deoxyuridine 5'-triphosphate nucleotidohydrolase.